The following is a 430-amino-acid chain: Serine--tRNA ligase (430 aa).

237-239 (TAE) lines the L-serine pocket. 268 to 270 (RSE) provides a ligand contact to ATP. An L-serine-binding site is contributed by glutamate 291. 355 to 358 (EISS) is an ATP binding site. Serine 391 contacts L-serine.

This sequence belongs to the class-II aminoacyl-tRNA synthetase family. Type-1 seryl-tRNA synthetase subfamily. Homodimer. The tRNA molecule binds across the dimer.

It is found in the cytoplasm. It catalyses the reaction tRNA(Ser) + L-serine + ATP = L-seryl-tRNA(Ser) + AMP + diphosphate + H(+). The enzyme catalyses tRNA(Sec) + L-serine + ATP = L-seryl-tRNA(Sec) + AMP + diphosphate + H(+). It participates in aminoacyl-tRNA biosynthesis; selenocysteinyl-tRNA(Sec) biosynthesis; L-seryl-tRNA(Sec) from L-serine and tRNA(Sec): step 1/1. Catalyzes the attachment of serine to tRNA(Ser). Is also able to aminoacylate tRNA(Sec) with serine, to form the misacylated tRNA L-seryl-tRNA(Sec), which will be further converted into selenocysteinyl-tRNA(Sec). The chain is Serine--tRNA ligase from Salmonella paratyphi C (strain RKS4594).